A 419-amino-acid chain; its full sequence is UDP-N-acetylglucosamine 1-carboxyvinyltransferase (419 aa).

22-23 (KN) contributes to the phosphoenolpyruvate binding site. Arginine 91 serves as a coordination point for UDP-N-acetyl-alpha-D-glucosamine. Cysteine 115 serves as the catalytic Proton donor. Residue cysteine 115 is modified to 2-(S-cysteinyl)pyruvic acid O-phosphothioketal. UDP-N-acetyl-alpha-D-glucosamine contacts are provided by residues 120–124 (RPVDL), 160–163 (KVSV), aspartate 305, and valine 327.

Belongs to the EPSP synthase family. MurA subfamily.

Its subcellular location is the cytoplasm. It catalyses the reaction phosphoenolpyruvate + UDP-N-acetyl-alpha-D-glucosamine = UDP-N-acetyl-3-O-(1-carboxyvinyl)-alpha-D-glucosamine + phosphate. The protein operates within cell wall biogenesis; peptidoglycan biosynthesis. Cell wall formation. Adds enolpyruvyl to UDP-N-acetylglucosamine. This is UDP-N-acetylglucosamine 1-carboxyvinyltransferase from Salmonella agona (strain SL483).